The sequence spans 92 residues: RQC P-site tRNA stabilizing factor (92 aa).

The 61-residue stretch at 5 to 65 (MRLDKYLKVS…GPKIVTAKIE (61 aa)) folds into the S4 RNA-binding domain.

It belongs to the RqcP family. Associates with stalled 50S ribosomal subunits. Binds to RqcH, 23S rRNA and the P-site tRNA. Does not require RqcH for association with 50S subunits.

In terms of biological role, key component of the ribosome quality control system (RQC), a ribosome-associated complex that mediates the extraction of incompletely synthesized nascent chains from stalled ribosomes and their subsequent degradation. RqcH recruits Ala-charged tRNA, and with RqcP directs the elongation of stalled nascent chains on 50S ribosomal subunits, leading to non-templated C-terminal alanine extensions (Ala tail). The Ala tail promotes nascent chain degradation. RqcP is associated with the translocation-like movement of the peptidyl-tRNA from the A-site into the P-site. The protein is RQC P-site tRNA stabilizing factor of Listeria innocua serovar 6a (strain ATCC BAA-680 / CLIP 11262).